The primary structure comprises 127 residues: Unclassified hydrophobin 5 (127 aa).

The first 24 residues, Met1 to Ala24, serve as a signal peptide directing secretion. 4 cysteine pairs are disulfide-bonded: Cys39/Cys107, Cys46/Cys101, Cys47/Cys92, and Cys108/Cys121.

Belongs to the fungal hydrophobin family. Self-assembles to form functional amyloid fibrils called rodlets. Self-assembly into fibrillar rodlets occurs spontaneously at hydrophobic:hydrophilic interfaces and the rodlets further associate laterally to form amphipathic monolayers.

Its subcellular location is the secreted. It is found in the cell wall. Its function is as follows. Aerial growth, conidiation, and dispersal of filamentous fungi in the environment rely upon a capability of their secreting small amphipathic proteins called hydrophobins (HPBs) with low sequence identity. Class I can self-assemble into an outermost layer of rodlet bundles on aerial cell surfaces, conferring cellular hydrophobicity that supports fungal growth, development and dispersal; whereas Class II form highly ordered films at water-air interfaces through intermolecular interactions but contribute nothing to the rodlet structure. The sequence is that of Unclassified hydrophobin 5 from Pleurotus ostreatus (strain PC15) (Oyster mushroom).